Here is a 21-residue protein sequence, read N- to C-terminus: Cupiennin-6d (21 aa).

Serine 21 is subject to Serine amide.

Expressed by the venom gland.

Its subcellular location is the secreted. The sequence is that of Cupiennin-6d from Cupiennius salei (American wandering spider).